The chain runs to 597 residues: Polyphenol oxidase latent form, chloroplastic (597 aa).

The N-terminal 49 residues, 1–49 (MATAPSPTTMGTYSSLISTNSFSTFLPNKSQLSLSGKSKHYVARRSSIS), are a transit peptide targeting the chloroplast. Positions 49–70 (SCKATNNNNSNNQNEQQEESSR) are disordered. The N-terminal 52 residues, 50 to 101 (CKATNNNNSNNQNEQQEESSRLLGKLDRRNILIGLGGLYGATTLDRKPFAFA), are a transit peptide targeting the thylakoid. Low complexity predominate over residues 54 to 63 (NNNNSNNQNE). Intrachain disulfides connect Cys-112–Cys-128 and Cys-127–Cys-189. Cu cation-binding residues include His-188, His-209, His-218, His-341, His-345, and His-375. Positions 192–209 (CNGAYPQVGFTDNDIQVH) form a cross-link, 2'-(S-cysteinyl)-histidine (Cys-His).

This sequence belongs to the tyrosinase family. As to quaternary structure, monomer. It depends on Cu(2+) as a cofactor. As to expression, expressed in immature-green fruit.

It localises to the plastid. Its subcellular location is the chloroplast thylakoid lumen. It carries out the reaction 2 catechol + O2 = 2 1,2-benzoquinone + 2 H2O. Activated in the presence of substrate at low pH. Specific activity fluctuates during fruit ripening, starting at immature-green stage, reaching a peak at the breaker stage, followed by a sharp decrease until the half-ripe stage to remain stable during the following development stages. Triggered by CuSO(4) and by low concentrations of SDS. Repressed by several inhibitors including 4-hexylresorcinol, ascorbic acid, benzoic acid, kojic acid, glutathione (reduced form), L-cysteine and sodium metabisulfite. Inhibited by various salt such as FeSO(4), KCl, NaCl, CaCl(2), MnCl(2), NiCl(2) and AlCl(3). Spontaneously activated during storage at 4 degrees Celsius. Its function is as follows. Catalyzes the oxidation of mono- and o-diphenols to o-diquinones. Uses preferentially 4-methylcatechol and chlorogenic acid as substrates, followed by caffeic acid, pyrogallol, and catechol, but barely active toward dopamine and L-dopa. No activity detected with monophenols (e.g. phenol and tyramine). The sequence is that of Polyphenol oxidase latent form, chloroplastic from Prunus armeniaca (Apricot).